Reading from the N-terminus, the 506-residue chain is Nostrin (506 aa).

An F-BAR domain is found at 1–260; it reads MRDPLTDCSY…AISKVDVEKD (260 aa). At S114 the chain carries Phosphoserine. 2 coiled-coil regions span residues 160–230 and 305–334; these read SLTQ…LNQY and KLGR…ASSS. An REM-1 domain is found at 292-372; sequence PMDKERRKSL…SYKLSSVLAD (81 aa). Residues 413 to 435 are disordered; the sequence is KAESKAPAGGQNNPSSSPSGSTV. A compositionally biased stretch (low complexity) spans 419–435; it reads PAGGQNNPSSSPSGSTV. Residues 438 to 497 enclose the SH3 domain; that stretch reads ASKHLCKALYTFQARQDDELNLEKGDIVTVHEKKEEGWWFGSLKGKRGHFPAAYVEELPP. S479 bears the Phosphoserine mark.

In terms of assembly, homotrimer. Interacts with NOS3, DNM2, WASL and CAV1. Interacts with DAB2. Interacts (via SH3 domain) with DNM2; this interaction allows the recruitment of NOS3 to dynamin-positive structures.

Its subcellular location is the cell membrane. The protein localises to the cytoplasmic vesicle. It localises to the cytoplasm. It is found in the cytoskeleton. The protein resides in the nucleus. Its function is as follows. Multivalent adapter protein which may decrease NOS3 activity by inducing its translocation away from the plasma membrane. The protein is Nostrin of Mus musculus (Mouse).